The sequence spans 100 residues: Large ribosomal subunit protein bL21 (100 aa).

It belongs to the bacterial ribosomal protein bL21 family. As to quaternary structure, part of the 50S ribosomal subunit. Contacts protein L20.

Its function is as follows. This protein binds to 23S rRNA in the presence of protein L20. The protein is Large ribosomal subunit protein bL21 of Mycoplasmopsis synoviae (strain 53) (Mycoplasma synoviae).